A 202-amino-acid polypeptide reads, in one-letter code: Tetranectin (202 aa).

Positions 1-21 are cleaved as a signal peptide; sequence MGFWGTYLLFCLFSFLSQLTA. Disulfide bonds link Cys71/Cys81, Cys98/Cys197, and Cys173/Cys189. The C-type lectin domain maps to 77–198; sequence VNLKCLLAFT…CRDQLPYICQ (122 aa).

As to quaternary structure, homotrimer. As to expression, highest expression in lung, skeletal muscle and heart. Expressed in retina.

Its subcellular location is the secreted. Tetranectin binds to plasminogen and to isolated kringle 4. May be involved in the packaging of molecules destined for exocytosis. Plays a role in retinal function. The polypeptide is Tetranectin (Clec3b) (Mus musculus (Mouse)).